A 377-amino-acid polypeptide reads, in one-letter code: Cell division cycle-associated protein 7 (377 aa).

Disordered regions lie at residues 58–113 (RTRS…EEDG) and 144–211 (IFSG…EEDK). Positions 76–100 (PARNTRRAANTKAAPPKPSESSAND) are enriched in low complexity. An interaction with MYC region spans residues 148–173 (RHSLPGHRTKDSKSPRRRTFPGVASR). The short motif at 163 to 179 (RRRTFPGVASRRNPERR) is the Nuclear localization signal element. T166 carries the post-translational modification Phosphothreonine. S193 is subject to Phosphoserine. Position 199 is a phosphothreonine (T199). Residues 199-210 (TEEEEDEEEEED) are compositionally biased toward acidic residues. Residue K211 forms a Glycyl lysine isopeptide (Lys-Gly) (interchain with G-Cter in SUMO2) linkage. At S220 the chain carries Phosphoserine. The mediates transcriptional activity stretch occupies residues 253-377 (EEEIRNICSN…SLKQEFEMQA (125 aa)).

As to quaternary structure, interacts with MYC (via C-terminus), YWHAE and YWHAZ. Phosphorylation at Thr-166 promotes interaction with YWHAE and YWHAZ, dissociation from MYC and sequestration in the cytoplasm.

The protein resides in the nucleus. It is found in the cytoplasm. Participates in MYC-mediated cell transformation and apoptosis; induces anchorage-independent growth and clonogenicity in lymphoblastoid cells. Insufficient to induce tumorigenicity when overexpressed but contributes to MYC-mediated tumorigenesis. May play a role as transcriptional regulator. This is Cell division cycle-associated protein 7 (Cdca7) from Rattus norvegicus (Rat).